The primary structure comprises 501 residues: ATP synthase subunit alpha (501 aa).

Residue 169–176 (GDRQTGKT) coordinates ATP.

It belongs to the ATPase alpha/beta chains family. As to quaternary structure, F-type ATPases have 2 components, CF(1) - the catalytic core - and CF(0) - the membrane proton channel. CF(1) has five subunits: alpha(3), beta(3), gamma(1), delta(1), epsilon(1). CF(0) has three main subunits: a(1), b(2) and c(9-12). The alpha and beta chains form an alternating ring which encloses part of the gamma chain. CF(1) is attached to CF(0) by a central stalk formed by the gamma and epsilon chains, while a peripheral stalk is formed by the delta and b chains.

The protein localises to the cell membrane. It carries out the reaction ATP + H2O + 4 H(+)(in) = ADP + phosphate + 5 H(+)(out). Functionally, produces ATP from ADP in the presence of a proton gradient across the membrane. The alpha chain is a regulatory subunit. This Streptococcus pyogenes serotype M2 (strain MGAS10270) protein is ATP synthase subunit alpha.